Here is a 154-residue protein sequence, read N- to C-terminus: 17.6 kDa class I heat shock protein (154 aa).

Positions 40 to 154 (ENSAFVNTRV…SDVKPIEISG (115 aa)) constitute a sHSP domain.

This sequence belongs to the small heat shock protein (HSP20) family. As to quaternary structure, forms oligomeric structures.

The protein localises to the cytoplasm. The sequence is that of 17.6 kDa class I heat shock protein (HSP17.6-L) from Glycine max (Soybean).